Here is a 365-residue protein sequence, read N- to C-terminus: Chorismate synthase (365 aa).

Basic and acidic residues predominate over residues 41–51 (IQKELDRRRPG). The tract at residues 41-62 (IQKELDRRRPGQSEVSTPRSEA) is disordered. Arginine 48 serves as a coordination point for NADP(+). FMN-binding positions include 125-127 (RSS), glycine 285, 300-304 (KPTPS), and arginine 327.

This sequence belongs to the chorismate synthase family. Requires FMNH2 as cofactor.

It carries out the reaction 5-O-(1-carboxyvinyl)-3-phosphoshikimate = chorismate + phosphate. It participates in metabolic intermediate biosynthesis; chorismate biosynthesis; chorismate from D-erythrose 4-phosphate and phosphoenolpyruvate: step 7/7. Catalyzes the anti-1,4-elimination of the C-3 phosphate and the C-6 proR hydrogen from 5-enolpyruvylshikimate-3-phosphate (EPSP) to yield chorismate, which is the branch point compound that serves as the starting substrate for the three terminal pathways of aromatic amino acid biosynthesis. This reaction introduces a second double bond into the aromatic ring system. The chain is Chorismate synthase from Methanosarcina acetivorans (strain ATCC 35395 / DSM 2834 / JCM 12185 / C2A).